Reading from the N-terminus, the 99-residue chain is Nucleoid-associated protein EbfC (99 aa).

Belongs to the YbaB/EbfC family. In terms of assembly, homodimer.

It localises to the cytoplasm. It is found in the nucleoid. Functionally, binds to DNA and alters its conformation. May be involved in regulation of gene expression, nucleoid organization and DNA protection. The protein is Nucleoid-associated protein EbfC of Borrelia turicatae (strain 91E135).